The chain runs to 357 residues: Meiotic driver wtf9 (357 aa).

The interval 1–39 is disordered; that stretch reads MKNKYYPLRSSMDEMSAKNDNEIDLEKGPLPEYNSEDGS. Over residues 11 to 29 the composition is skewed to basic and acidic residues; that stretch reads SMDEMSAKNDNEIDLEKGP. 7 helical membrane passes run 89-109, 119-139, 149-169, 198-218, 232-252, 256-276, and 286-306; these read LLIS…CVNP, AFFV…FCFF, CIKV…ISLA, VVII…RSKF, CSIS…FWTL, FSGL…TKGL, and ATGY…LFFY.

It belongs to the WTF family. Homomer. Forms protein aggregates. The two isoforms can interact with each other and with themselves. High sequence similarity is required for their interaction.

The protein resides in the spore membrane. It localises to the vacuole membrane. It is found in the ascus epiplasm. Its subcellular location is the cytoplasm. The protein localises to the endoplasmic reticulum membrane. In terms of biological role, promotes unequal transmission of alleles from the parental zygote to progeny spores by acting as poison/antidote system where the poison and antidote proteins are produced from the same locus; the poison component is trans-acting and targets all spores within an ascus whereas the antidote component is spore-specific, leading to poisoning of all progeny that do not inherit the allele. Its function is as follows. Localizes isoform 2 to the vacuole thereby facilitating its degradation. Forms toxic aggregates that disrupt spore maturation. The chain is Meiotic driver wtf9 from Schizosaccharomyces kambucha (Fission yeast).